Here is a 2677-residue protein sequence, read N- to C-terminus: Probable helicase senataxin (2677 aa).

Residue Lys-339 forms a Glycyl lysine isopeptide (Lys-Gly) (interchain with G-Cter in SUMO1) linkage. Phosphoserine occurs at positions 615, 642, and 878. A Glycyl lysine isopeptide (Lys-Gly) (interchain with G-Cter in SUMO2) cross-link involves residue Lys-894. Phosphoserine occurs at positions 911, 947, 956, 1017, and 1019. Residues Lys-1056 and Lys-1063 each participate in a glycyl lysine isopeptide (Lys-Gly) (interchain with G-Cter in SUMO2) cross-link. Disordered stretches follow at residues 1158–1219 (KKPK…TTVS) and 1237–1258 (PVSK…RSSN). Residues 1176–1187 (PSSSVRNEGQSD) show a composition bias toward polar residues. Residues 1188 to 1205 (TNKRDLVGNDFKSIDRRT) are compositionally biased toward basic and acidic residues. A compositionally biased stretch (polar residues) spans 1206 to 1219 (STPNSRIQRATTVS). Position 1330 is a phosphoserine (Ser-1330). Glycyl lysine isopeptide (Lys-Gly) (interchain with G-Cter in SUMO2) cross-links involve residues Lys-1340 and Lys-1341. The disordered stretch occupies residues 1351–1385 (QRQIRPKSQKNRRRLSDCESTDVKRAGSHTAQNSD). The span at 1354-1363 (IRPKSQKNRR) shows a compositional bias: basic residues. Positions 1364–1375 (RLSDCESTDVKR) are enriched in basic and acidic residues. Phosphoserine is present on Ser-1366. Lys-1415 participates in a covalent cross-link: Glycyl lysine isopeptide (Lys-Gly) (interchain with G-Cter in SUMO2). Ser-1489 is subject to Phosphoserine. Positions 1579 to 1604 (FRKPGLPPPASKPLRPTTKIFSSKST) are disordered. Residues Ser-1621, Ser-1623, and Ser-1663 each carry the phosphoserine modification. ATP is bound at residue 1963-1970 (GPPGTGKS). The Bipartite nuclear localization signal signature appears at 2070–2087 (KKELPSHVQAMHKRKEFL). A coiled-coil region spans residues 2105-2136 (REIQRQELDENISKVSKERQELASKIKEVQGR). A Phosphothreonine modification is found at Thr-2474. Disordered regions lie at residues 2474 to 2496 (THPP…SKLD), 2556 to 2577 (WDPQ…EPGF), and 2597 to 2677 (LSSH…RKLL). Residues 2560 to 2573 (PSSPQHPGATPPTG) show a composition bias toward pro residues. Positions 2628–2671 (ELCHRREARAFSEGEQEKCGSETHHTRRNSRWDKRTLEQEDSSS) are enriched in basic and acidic residues. The tract at residues 2661 to 2677 (KRTLEQEDSSSKKRKLL) is necessary for nuclear localization.

This sequence belongs to the DNA2/NAM7 helicase family. Homodimer. Interacts with PER2; the interaction inhibits termination of circadian target genes. Interacts with CHD4, POLR2A, PRKDC and TRIM28. Interacts with UBE2I. Interacts (via N-terminus domain) with EXOSC9 (via C-terminus region); the interaction enhances SETX sumoylation. Interacts with NCL (via N-terminus domain). Interacts with PABPN1, PABPC1 and SF3B1. Interacts with SMN1/SMN2 and POLR2A; SMN1/SMN2 recruits SETX to POLR2A. Ubiquitinated. In terms of processing, sumoylated preferentially with SUMO2 or SUMO3. In terms of tissue distribution, highly expressed in skeletal muscle. Expressed in heart, fibroblast, placenta and liver. Weakly expressed in brain and lung. Expressed in the cortex of the kidney (highly expressed in tubular epithelial cells but low expression in the glomerulus).

The protein localises to the nucleus. It is found in the nucleoplasm. It localises to the nucleolus. Its subcellular location is the cytoplasm. The protein resides in the chromosome. The protein localises to the telomere. It is found in the cell projection. It localises to the axon. Its subcellular location is the growth cone. Functionally, probable RNA/DNA helicase involved in diverse aspects of RNA metabolism and genomic integrity. Plays a role in transcription regulation by its ability to modulate RNA Polymerase II (Pol II) binding to chromatin and through its interaction with proteins involved in transcription. Contributes to the mRNA splicing efficiency and splice site selection. Required for the resolution of R-loop RNA-DNA hybrid formation at G-rich pause sites located downstream of the poly(A) site, allowing XRN2 recruitment and XRN2-mediated degradation of the downstream cleaved RNA and hence efficient RNA polymerase II (RNAp II) transcription termination. Required for the 3' transcriptional termination of PER1 and CRY2, thus playing an important role in the circadian rhythm regulation. Involved in DNA double-strand breaks damage response generated by oxidative stress. In association with RRP45, targets the RNA exosome complex to sites of transcription-induced DNA damage. Plays a role in the development and maturation of germ cells: essential for male meiosis, acting at the interface of transcription and meiotic recombination, and in the process of gene silencing during meiotic sex chromosome inactivation (MSCI). May be involved in telomeric stability through the regulation of telomere repeat-containing RNA (TERRA) transcription. Plays a role in neurite outgrowth in hippocampal cells through FGF8-activated signaling pathways. Inhibits retinoic acid-induced apoptosis. This is Probable helicase senataxin from Homo sapiens (Human).